The chain runs to 379 residues: Cytochrome b (379 aa).

Helical transmembrane passes span 33–53 (FGSL…FLAM), 77–98 (WLIR…YIHI), 113–133 (WNIG…GYVL), and 178–198 (FFAF…VHLL). The heme b site is built by His83 and His97. The heme b site is built by His182 and His196. His201 serves as a coordination point for a ubiquinone. The next 4 membrane-spanning stretches (helical) occupy residues 226–246 (TKDF…VLYF), 288–308 (LGGV…PYIH), 320–340 (ISQF…WIGG), and 347–367 (FIII…IXMX).

This sequence belongs to the cytochrome b family. As to quaternary structure, the cytochrome bc1 complex contains 11 subunits: 3 respiratory subunits (MT-CYB, CYC1 and UQCRFS1), 2 core proteins (UQCRC1 and UQCRC2) and 6 low-molecular weight proteins (UQCRH/QCR6, UQCRB/QCR7, UQCRQ/QCR8, UQCR10/QCR9, UQCR11/QCR10 and a cleavage product of UQCRFS1). This cytochrome bc1 complex then forms a dimer. It depends on heme b as a cofactor.

Its subcellular location is the mitochondrion inner membrane. Component of the ubiquinol-cytochrome c reductase complex (complex III or cytochrome b-c1 complex) that is part of the mitochondrial respiratory chain. The b-c1 complex mediates electron transfer from ubiquinol to cytochrome c. Contributes to the generation of a proton gradient across the mitochondrial membrane that is then used for ATP synthesis. The chain is Cytochrome b (MT-CYB) from Thomomys umbrinus (Southern pocket gopher).